The sequence spans 488 residues: Probable malate:quinone oxidoreductase (488 aa).

It belongs to the MQO family. It depends on FAD as a cofactor.

The catalysed reaction is (S)-malate + a quinone = a quinol + oxaloacetate. It functions in the pathway carbohydrate metabolism; tricarboxylic acid cycle; oxaloacetate from (S)-malate (quinone route): step 1/1. This chain is Probable malate:quinone oxidoreductase, found in Neisseria meningitidis serogroup B (strain ATCC BAA-335 / MC58).